The primary structure comprises 34 residues: MDIRLLIVLLPVLAAASWALYNIGRVALQQFRSM.

The Lumenal portion of the chain corresponds to 1 to 4 (MDIR). Residues 5 to 23 (LLIVLLPVLAAASWALYNI) form a helical membrane-spanning segment. Residues 24 to 34 (GRVALQQFRSM) are Stromal-facing.

The protein belongs to the PsbY family. PSII is composed of 1 copy each of membrane proteins PsbA, PsbB, PsbC, PsbD, PsbE, PsbF, PsbH, PsbI, PsbJ, PsbK, PsbL, PsbM, PsbT, PsbX, PsbY, PsbZ, Psb30/Ycf12, at least 3 peripheral proteins of the oxygen-evolving complex and a large number of cofactors. It forms dimeric complexes.

The protein resides in the plastid. The protein localises to the chloroplast thylakoid membrane. Functionally, loosely associated component of the core of photosystem II (PSII), it is not always seen in crystals. PSII is a light-driven water plastoquinone oxidoreductase, using light energy to abstract electrons from H(2)O, generating a proton gradient subsequently used for ATP formation. The sequence is that of Photosystem II reaction center protein Y from Gracilaria tenuistipitata var. liui (Red alga).